Consider the following 599-residue polypeptide: Thiamine transporter THI72 (599 aa).

The next 11 helical transmembrane spans lie at 42 to 62 (WGFW…GMWI), 78 to 98 (IGAF…NSCP), 112 to 132 (FVFG…MSIV), 174 to 194 (LIGF…KPYH), 197 to 217 (YILI…VIYL), 280 to 300 (IVAL…GASA), 333 to 353 (FFCG…NCGF), 372 to 392 (GAIF…YNSS), 395 to 415 (FLTV…VMIC), 447 to 467 (AIVA…WEVN), and 484 to 504 (SFFS…LFPF). The disordered stretch occupies residues 553 to 599 (HEYKPESSDDELPELTKTSSENTKVFEIVHQKDNEKESSTSSEKQIA). Residues serine 560 and serine 572 each carry the phosphoserine modification. The segment covering 579 to 590 (EIVHQKDNEKES) has biased composition (basic and acidic residues).

This sequence belongs to the purine-cytosine permease (2.A.39) family.

It localises to the membrane. In terms of biological role, low affinity thiamine transporter responsible for intake of thiamine. It is possible that the primary function is the uptake of closely related compounds and that thiamine transport is a secondary activity of these proteins. This is Thiamine transporter THI72 (THI72) from Saccharomyces cerevisiae (strain ATCC 204508 / S288c) (Baker's yeast).